A 430-amino-acid chain; its full sequence is Asparagine--tRNA ligase (430 aa).

Belongs to the class-II aminoacyl-tRNA synthetase family.

It is found in the cytoplasm. The enzyme catalyses tRNA(Asn) + L-asparagine + ATP = L-asparaginyl-tRNA(Asn) + AMP + diphosphate + H(+). This chain is Asparagine--tRNA ligase, found in Thermococcus gammatolerans (strain DSM 15229 / JCM 11827 / EJ3).